Reading from the N-terminus, the 400-residue chain is tRNA-specific 2-thiouridylase MnmA (400 aa).

ATP contacts are provided by residues 19 to 26 (AMSGGVDS) and leucine 45. The active-site Nucleophile is the cysteine 113. Cysteine 113 and cysteine 210 are oxidised to a cystine. Residue glycine 137 coordinates ATP. Residues 160–162 (RDQ) form an interaction with tRNA region. Residue cysteine 210 is the Cysteine persulfide intermediate of the active site.

This sequence belongs to the MnmA/TRMU family.

The protein localises to the cytoplasm. It catalyses the reaction S-sulfanyl-L-cysteinyl-[protein] + uridine(34) in tRNA + AH2 + ATP = 2-thiouridine(34) in tRNA + L-cysteinyl-[protein] + A + AMP + diphosphate + H(+). In terms of biological role, catalyzes the 2-thiolation of uridine at the wobble position (U34) of tRNA, leading to the formation of s(2)U34. The protein is tRNA-specific 2-thiouridylase MnmA of Nitrobacter winogradskyi (strain ATCC 25391 / DSM 10237 / CIP 104748 / NCIMB 11846 / Nb-255).